A 1285-amino-acid chain; its full sequence is MALARPGTPDPQALASVLLLLLWAPALSLLAGTVPSEPPSACASDPCAPGTECQATESGGYTCGPMEPRGCATQPCHHGALCVPQGPDPTGFRCYCVPGFQGPRCELDIDECASRPCHHGATCRNLADRYECHCPLGYAGVTCEMEVDECASAPCLHGGSCLDGVGSFRCVCAPGYGGTRCQLDLDECQSQPCAHGGTCHDLVNGFRCDCAGTGYEGTHCEREVLECASAPCEHNASCLEGLGSFRCLCWPGYSGELCEVDEDECASSPCQHGGRCLQRSDPALYGGVQAAFPGAFSFRHAAGFLCHCPPGFEGADCGVEVDECASRPCLNGGHCQDLPNGFQCHCPDGYAGPTCEEDVDECLSDPCLHGGTCSDTVAGYICRCPETWGGRDCSVQLTGCQGHTCPLAATCIPIFESGVHSYVCHCPPGTHGPFCGQNTTFSVMAGSPIQASVPAGGPLGLALRFRTTLPAGTLATRNDTKESLELALVAATLQATLWSYSTTVLVLRLPDLALNDGHWHQVEVVLHLATLELRLWHEGCPARLCVASGPVALASTASATPLPAGISSAQLGDATFAGCLQDVRVDGHLLLPEDLGENVLLGCERREQCRPLPCVHGGSCVDLWTHFRCDCARPHRGPTCADEIPAATFGLGGAPSSASFLLQELPGPNLTVSFLLRTRESAGLLLQFANDSAAGLTVFLSEGRIRAEVPGSPAVVLPGRWDDGLRHLVMLSFGPDQLQDLGQHVHVGGRLLAADSQPWGGPFRGCLQDLRLDGCHLPFFPLPLDNSSQPSELGGRQSWNLTAGCVSEDMCSPDPCFNGGTCLVTWNDFHCTCPANFTGPTCAQQLWCPGQPCLPPATCEEVPDGFVCVAEATFREGPPAAFSGHNASSGRLLGGLSLAFRTRDSEAWLLRAAAGALEGVWLAVRNGSLAGGVRGGHGLPGAVLPIPGPRVADGAWHRVRLAMERPAATTSRWLLWLDGAATPVALRGLASDLGFLQGPGAVRILLAENFTGCLGRVALGGLPLPLARPRPGAAPGAREHFASWPGTPAPILGCRGAPVCAPSPCLHDGACRDLFDAFACACGPGWEGPRCEAHVDPCHSAPCARGRCHTHPDGRFECRCPPGFGGPRCRLPVPSKECSLNVTCLDGSPCEGGSPAANCSCLEGLAGQRCQVPTLPCEANPCLNGGTCRAAGGVSECICNARFSGQFCEVAKGLPLPLPFPLLEVAVPAACACLLLLLLGLLSGILAARKRRQSEGTYSPSQQEVAGARLEMDSVLKVPPEERLI.

A signal peptide spans 1-28; that stretch reads MALARPGTPDPQALASVLLLLLWAPALS. The segment at 1–350 is required for maximum inhibition of APP amyloid-beta peptide secretion; sequence MALARPGTPD…GFQCHCPDGY (350 aa). Residues 67–106 form the EGF-like 1 domain; it reads EPRGCATQPCHHGALCVPQGPDPTGFRCYCVPGFQGPRCE. Intrachain disulfides connect cysteine 71-cysteine 82, cysteine 76-cysteine 94, cysteine 96-cysteine 105, cysteine 112-cysteine 123, cysteine 117-cysteine 132, cysteine 134-cysteine 143, cysteine 150-cysteine 161, cysteine 155-cysteine 170, cysteine 172-cysteine 181, cysteine 188-cysteine 199, cysteine 193-cysteine 208, cysteine 210-cysteine 220, cysteine 227-cysteine 238, cysteine 232-cysteine 247, cysteine 249-cysteine 258, cysteine 265-cysteine 276, cysteine 270-cysteine 306, cysteine 308-cysteine 317, cysteine 324-cysteine 335, cysteine 329-cysteine 344, cysteine 346-cysteine 355, cysteine 362-cysteine 373, cysteine 367-cysteine 382, cysteine 384-cysteine 393, cysteine 400-cysteine 411, cysteine 405-cysteine 424, and cysteine 426-cysteine 435. The EGF-like 2; calcium-binding domain maps to 108 to 144; the sequence is DIDECASRPCHHGATCRNLADRYECHCPLGYAGVTCE. The region spanning 146–182 is the EGF-like 3; calcium-binding domain; sequence EVDECASAPCLHGGSCLDGVGSFRCVCAPGYGGTRCQ. One can recognise an EGF-like 4; calcium-binding domain in the interval 184–221; sequence DLDECQSQPCAHGGTCHDLVNGFRCDCAGTGYEGTHCE. EGF-like domains lie at 223–259 and 261–318; these read EVLE…ELCE and DEDE…ADCG. An N-linked (GlcNAc...) asparagine glycan is attached at asparagine 235. O-linked (Glc...) serine glycosylation is present at serine 267. An EGF-like 7; calcium-binding domain is found at 320–356; it reads EVDECASRPCLNGGHCQDLPNGFQCHCPDGYAGPTCE. Positions 358–394 constitute an EGF-like 8; calcium-binding domain; it reads DVDECLSDPCLHGGTCSDTVAGYICRCPETWGGRDCS. An EGF-like 9 domain is found at 396-436; that stretch reads QLTGCQGHTCPLAATCIPIFESGVHSYVCHCPPGTHGPFCG. One can recognise a Laminin G-like 1 domain in the interval 431-603; that stretch reads HGPFCGQNTT…DLGENVLLGC (173 aa). N-linked (GlcNAc...) asparagine glycans are attached at residues asparagine 438 and asparagine 478. 4 cysteine pairs are disulfide-bonded: cysteine 579–cysteine 603, cysteine 609–cysteine 620, cysteine 614–cysteine 629, and cysteine 631–cysteine 640. Residues 605 to 641 form the EGF-like 10 domain; that stretch reads RREQCRPLPCVHGGSCVDLWTHFRCDCARPHRGPTCA. Residues 647-805 form the Laminin G-like 2 domain; the sequence is ATFGLGGAPS…RQSWNLTAGC (159 aa). Residues asparagine 669, asparagine 690, asparagine 786, and asparagine 800 are each glycosylated (N-linked (GlcNAc...) asparagine). 4 disulfides stabilise this stretch: cysteine 766–cysteine 805, cysteine 811–cysteine 822, cysteine 816–cysteine 831, and cysteine 833–cysteine 842. The EGF-like 11 domain occupies 807 to 843; that stretch reads SEDMCSPDPCFNGGTCLVTWNDFHCTCPANFTGPTCA. N-linked (GlcNAc...) asparagine glycans are attached at residues asparagine 836, asparagine 886, asparagine 926, and asparagine 1009. A Laminin G-like 3 domain is found at 871–1054; that stretch reads EATFREGPPA…PGTPAPILGC (184 aa). Disulfide bonds link cysteine 1013–cysteine 1054, cysteine 1060–cysteine 1071, cysteine 1065–cysteine 1080, cysteine 1082–cysteine 1091, cysteine 1098–cysteine 1108, cysteine 1103–cysteine 1118, cysteine 1120–cysteine 1129, cysteine 1138–cysteine 1150, cysteine 1144–cysteine 1159, cysteine 1161–cysteine 1170, cysteine 1177–cysteine 1188, cysteine 1182–cysteine 1197, and cysteine 1199–cysteine 1208. EGF-like domains lie at 1056–1092, 1094–1130, 1134–1171, and 1173–1209; these read GAPV…PRCE, HVDP…PRCR, PSKE…QRCQ, and PTLP…QFCE. Asparagine 1141 and asparagine 1158 each carry an N-linked (GlcNAc...) asparagine glycan. A helical transmembrane segment spans residues 1225–1245; sequence VAVPAACACLLLLLLGLLSGI. The segment at 1249 to 1285 is interaction with EPB41L5; it reads RKRRQSEGTYSPSQQEVAGARLEMDSVLKVPPEERLI.

It belongs to the Crumbs protein family. In terms of assembly, associates with the gamma-secretase complex via interaction (via the transmembrane domain) with PSEN1/PS1. Interacts (via intracellular domain) with EPB41L5. Interacts with PALS1. In terms of processing, O-glucosylated by POGLUT1 at Ser-267; consists of an O-glucose trisaccharide, in which the O-glucose is elongated by the addition of two xylose residues. O-glucosylation is required for localization at the plasma membrane. Post-translationally, N-glycosylated. As to expression, expressed in glomeruli, podocytes of the glomerular capillary loops, and parietal glomerular epithelial cells in the kidney (at protein level). Expressed in retina, fetal eye and brain. Also expressed in kidney, RPE/choroid, and at low levels in lung, placenta, and heart.

It is found in the apical cell membrane. Its subcellular location is the cytoplasm. The protein resides in the cell junction. The protein localises to the secreted. Apical polarity protein that plays a central role during the epithelial-to-mesenchymal transition (EMT) at gastrulation, when newly specified mesodermal cells move inside the embryo. Acts by promoting cell ingression, the process by which cells leave the epithelial epiblast and move inside the embryo to form a new tissue layer. The anisotropic distribution of CRB2 and MYH10/myosin-IIB at cell edges define which cells will ingress: cells with high apical CRB2 are probably extruded from the epiblast by neighboring cells with high levels of apical MYH10/myosin-IIB. Plays a role in the maintenance of retinal neuroepithelium organization, structural integrity, adhesion, photoreceptor polarity and retinal photoreceptor layer thickness. May play a role in determining the length of cone photoreceptor outer segments and proliferation of late-born progenitor cells. Also required for maintenance of the apical polarity complex during development of the cortex. Inhibits gamma-secretase-dependent cleavage of APP and secretion of amyloid-beta peptide 40 and amyloid-beta peptide 42, and thereby inhibits gamma-secretase-dependent Notch transcription. This Homo sapiens (Human) protein is Protein crumbs homolog 2.